A 323-amino-acid chain; its full sequence is ATP synthase gamma chain (323 aa).

The disordered stretch occupies residues 215–237 (PAGGPAKEQEQGDEGGHGAPSAA). The segment covering 221–230 (KEQEQGDEGG) has biased composition (basic and acidic residues).

The protein belongs to the ATPase gamma chain family. As to quaternary structure, F-type ATPases have 2 components, CF(1) - the catalytic core - and CF(0) - the membrane proton channel. CF(1) has five subunits: alpha(3), beta(3), gamma(1), delta(1), epsilon(1). CF(0) has three main subunits: a, b and c.

It localises to the cell inner membrane. Produces ATP from ADP in the presence of a proton gradient across the membrane. The gamma chain is believed to be important in regulating ATPase activity and the flow of protons through the CF(0) complex. This Sorangium cellulosum (strain So ce56) (Polyangium cellulosum (strain So ce56)) protein is ATP synthase gamma chain.